The sequence spans 413 residues: Serine/threonine transporter SstT (413 aa).

The next 9 membrane-spanning stretches (helical) occupy residues 21 to 41 (IGLL…SALG), 61 to 81 (SVAP…KKVG), 89 to 109 (IIYL…FASF), 146 to 166 (ITAL…GLGI), 189 to 209 (IVHF…ASTL), 224 to 244 (LAVL…IIVF), 305 to 325 (MGGA…TLGI), 337 to 357 (LVAS…LLLI), and 363 to 383 (LFGI…IIGV).

This sequence belongs to the dicarboxylate/amino acid:cation symporter (DAACS) (TC 2.A.23) family.

It is found in the cell inner membrane. It catalyses the reaction L-serine(in) + Na(+)(in) = L-serine(out) + Na(+)(out). The catalysed reaction is L-threonine(in) + Na(+)(in) = L-threonine(out) + Na(+)(out). Functionally, involved in the import of serine and threonine into the cell, with the concomitant import of sodium (symport system). This Mannheimia succiniciproducens (strain KCTC 0769BP / MBEL55E) protein is Serine/threonine transporter SstT.